Here is a 161-residue protein sequence, read N- to C-terminus: 3-isopropylmalate dehydratase small subunit 1 (161 aa).

Belongs to the LeuD family. LeuD type 2 subfamily. Heterodimer of LeuC and LeuD.

The enzyme catalyses (2R,3S)-3-isopropylmalate = (2S)-2-isopropylmalate. It participates in amino-acid biosynthesis; L-leucine biosynthesis; L-leucine from 3-methyl-2-oxobutanoate: step 2/4. Its function is as follows. Catalyzes the isomerization between 2-isopropylmalate and 3-isopropylmalate, via the formation of 2-isopropylmaleate. The polypeptide is 3-isopropylmalate dehydratase small subunit 1 (leuD1) (Archaeoglobus fulgidus (strain ATCC 49558 / DSM 4304 / JCM 9628 / NBRC 100126 / VC-16)).